The sequence spans 207 residues: Guanylate kinase (207 aa).

Positions 4 to 184 (GLLFIVSAPS…AVSDLYKIIR (181 aa)) constitute a Guanylate kinase-like domain. 11 to 18 (APSGTGKS) contributes to the ATP binding site.

It belongs to the guanylate kinase family.

The protein localises to the cytoplasm. It carries out the reaction GMP + ATP = GDP + ADP. In terms of biological role, essential for recycling GMP and indirectly, cGMP. This Buchnera aphidicola subsp. Baizongia pistaciae (strain Bp) protein is Guanylate kinase.